A 362-amino-acid polypeptide reads, in one-letter code: MKIKKIKLLKALALTGAFGIVATVPVIVSSCSSTSENNGNGNGNGGTDGNTQQTEVTPAIKSEVSLTGALSKIYDTKTGTDRETTSQLIVKDIKANPENYFTNGEALKDVIASATVTVDGGFTESTFTGEAYSVWSAKADVKKGTYSQASKQLDIKSINDLQTVLGDSAAIKGICDLIPNLKLNNGTDYKVTNNGLSLSEDLLHINVTAKDGQTDVSMDLAIPVSDLNLKIDGLKISVSGTGIKTSELTTNYKFNIGIDNTVKTLTPAAVTLAEADRTNAEKVLEKLGYATVSGSTYTLDQDKLADALGLYNCKFEAVKSEKDSTNNNKYTVTLKATPNDGYFWEDGTNGAKEEISFVATFS.

The signal sequence occupies residues 1 to 30; that stretch reads MKIKKIKLLKALALTGAFGIVATVPVIVSS. Cysteine 31 is lipidated: N-palmitoyl cysteine. Residue cysteine 31 is the site of S-diacylglycerol cysteine attachment. The tract at residues 33 to 53 is disordered; it reads STSENNGNGNGNGGTDGNTQQ.

The protein belongs to the p35 lipoprotein family. Post-translationally, the N-terminus is blocked.

The protein resides in the cell membrane. Major M.penetrans antigen. In Malacoplasma penetrans (Mycoplasma penetrans), this protein is Lipoprotein p35.